A 694-amino-acid polypeptide reads, in one-letter code: Elongation factor G (694 aa).

The tr-type G domain occupies 9 to 288 (SKIRNIGIMA…VIVKWLPSPK (280 aa)). GTP contacts are provided by residues 18–25 (AHIDAGKT), 82–86 (DTPGH), and 136–139 (NKMD).

The protein belongs to the TRAFAC class translation factor GTPase superfamily. Classic translation factor GTPase family. EF-G/EF-2 subfamily.

It is found in the cytoplasm. In terms of biological role, catalyzes the GTP-dependent ribosomal translocation step during translation elongation. During this step, the ribosome changes from the pre-translocational (PRE) to the post-translocational (POST) state as the newly formed A-site-bound peptidyl-tRNA and P-site-bound deacylated tRNA move to the P and E sites, respectively. Catalyzes the coordinated movement of the two tRNA molecules, the mRNA and conformational changes in the ribosome. The chain is Elongation factor G from Chlamydia abortus (strain DSM 27085 / S26/3) (Chlamydophila abortus).